The following is a 700-amino-acid chain: Calpain-2 catalytic subunit (700 aa).

An N-acetylalanine modification is found at Ala-2. A propeptide spans 2 to 19 (anchors to the small subunit); it reads AGIAMKLAKDREAAEGLG. The Calpain catalytic domain occupies 45–344; sequence LFQDPSFPAL…YSRLEICNLT (300 aa). Ile-89, Gly-91, and Asp-96 together coordinate Ca(2+). The active site involves Cys-105. Glu-175, Gln-229, and Lys-230 together coordinate Ca(2+). Active-site residues include His-262 and Asn-286. Positions 292, 299, 319, and 323 each coordinate Ca(2+). Residues 345-514 form a domain III region; sequence PDTLTCDSYK…KKADYQTVDD (170 aa). The tract at residues 515–529 is linker; it reads EIEANIEEIEANEED. Positions 530–700 are domain IV; the sequence is IGDGFRRLFA…LISWLSFSVL (171 aa). 16 residues coordinate Ca(2+): Ala-542, Asp-545, Glu-547, Glu-552, Asp-585, Asp-587, Ser-589, Lys-591, Glu-596, Asp-615, Asp-617, Ser-619, Thr-621, Glu-626, Asp-658, and Asn-661. 2 EF-hand domains span residues 572 to 605 and 602 to 637; these read FSIETCKIMVDMLDEDGSGKLGLKEFYILWTKIQ and TKIQKYQKIYREIDVDRSGTMNSYEMRKALEEAGFK. The EF-hand 3 domain maps to 667-700; sequence VRLEILFKIFKQLDPENTGTIQLDLISWLSFSVL.

It belongs to the peptidase C2 family. In terms of assembly, forms a heterodimer with a small (regulatory) subunit (CAPNS1). Interacts with CPEB3; this leads to cleavage of CPEB3. The cofactor is Ca(2+). As to expression, ubiquitous.

The protein resides in the cytoplasm. The protein localises to the cell membrane. It catalyses the reaction Broad endopeptidase specificity.. Activated by 200-1000 micromolar concentrations of calcium and inhibited by calpastatin. Functionally, calcium-regulated non-lysosomal thiol-protease which catalyze limited proteolysis of substrates involved in cytoskeletal remodeling and signal transduction. Proteolytically cleaves MYOC at 'Arg-226'. Proteolytically cleaves CPEB3 following neuronal stimulation which abolishes CPEB3 translational repressor activity, leading to translation of CPEB3 target mRNAs. This Rattus norvegicus (Rat) protein is Calpain-2 catalytic subunit (Capn2).